The following is a 295-amino-acid chain: 3-hydroxy-5-phosphonooxypentane-2,4-dione thiolase (295 aa).

Lys-203 functions as the Schiff-base intermediate with substrate in the catalytic mechanism.

It belongs to the DeoC/FbaB aldolase family. Homodecamer.

It is found in the cytoplasm. The enzyme catalyses dihydroxyacetone phosphate + acetyl-CoA = 3-hydroxy-2,4-dioxopentyl phosphate + CoA. Functionally, involved in the degradation of phospho-AI-2, thereby terminating induction of the lsr operon and closing the AI-2 signaling cycle. Catalyzes the transfer of an acetyl moiety from 3-hydroxy-5-phosphonooxypentane-2,4-dione to CoA to form glycerone phosphate and acetyl-CoA. This Klebsiella pneumoniae subsp. pneumoniae (strain ATCC 700721 / MGH 78578) protein is 3-hydroxy-5-phosphonooxypentane-2,4-dione thiolase.